Reading from the N-terminus, the 336-residue chain is tRNA-dihydrouridine(20/20a) synthase (336 aa).

FMN is bound by residues 24–26 and glutamine 77; that span reads PMM. The active-site Proton donor is the cysteine 107. FMN is bound by residues lysine 146, histidine 178, 218–220, and 240–241; these read NGG and GR.

This sequence belongs to the Dus family. DusA subfamily. FMN is required as a cofactor.

The catalysed reaction is 5,6-dihydrouridine(20) in tRNA + NADP(+) = uridine(20) in tRNA + NADPH + H(+). It carries out the reaction 5,6-dihydrouridine(20) in tRNA + NAD(+) = uridine(20) in tRNA + NADH + H(+). It catalyses the reaction 5,6-dihydrouridine(20a) in tRNA + NADP(+) = uridine(20a) in tRNA + NADPH + H(+). The enzyme catalyses 5,6-dihydrouridine(20a) in tRNA + NAD(+) = uridine(20a) in tRNA + NADH + H(+). In terms of biological role, catalyzes the synthesis of 5,6-dihydrouridine (D), a modified base found in the D-loop of most tRNAs, via the reduction of the C5-C6 double bond in target uridines. Specifically modifies U20 and U20a in tRNAs. The polypeptide is tRNA-dihydrouridine(20/20a) synthase (Pseudomonas syringae pv. tomato (strain ATCC BAA-871 / DC3000)).